We begin with the raw amino-acid sequence, 554 residues long: Probable pectinesterase/pectinesterase inhibitor 6 (554 aa).

The signal sequence occupies residues 1-32 (MDHKILLTPPKSLYTKCIITIIYVVSISHLNA). A pectinesterase inhibitor 6 region spans residues 29–183 (HLNAHFITSC…TKSISNSLAV (155 aa)). N-linked (GlcNAc...) asparagine glycans are attached at residues Asn-119 and Asn-172. Residues 250 to 540 (DLVVAKDGSG…FTVENFLDGN (291 aa)) form a pectinesterase 6 region. 2 residues coordinate substrate: Thr-327 and Gln-357. The Proton donor; for pectinesterase activity role is filled by Asp-380. The cysteines at positions 394 and 414 are disulfide-linked. The active-site Nucleophile; for pectinesterase activity is Asp-401. 2 residues coordinate substrate: Arg-460 and Trp-462.

In the N-terminal section; belongs to the PMEI family. This sequence in the C-terminal section; belongs to the pectinesterase family. In terms of tissue distribution, expressed in rosette leaves, flower and siliques.

The protein localises to the secreted. The protein resides in the cell wall. It catalyses the reaction [(1-&gt;4)-alpha-D-galacturonosyl methyl ester](n) + n H2O = [(1-&gt;4)-alpha-D-galacturonosyl](n) + n methanol + n H(+). The protein operates within glycan metabolism; pectin degradation; 2-dehydro-3-deoxy-D-gluconate from pectin: step 1/5. In terms of biological role, acts in the modification of cell walls via demethylesterification of cell wall pectin. This is Probable pectinesterase/pectinesterase inhibitor 6 (PME6) from Arabidopsis thaliana (Mouse-ear cress).